A 634-amino-acid polypeptide reads, in one-letter code: Dachshund homolog 2 (634 aa).

The DACHbox-N stretch occupies residues arginine 76–leucine 162. Disordered regions lie at residues arginine 171–leucine 194, leucine 244–glutamine 286, and isoleucine 378–histidine 416. The segment covering leucine 244–serine 269 has biased composition (polar residues). Residues serine 396 to glutamine 412 are compositionally biased toward low complexity. The segment at serine 488–leucine 568 is DACHbox-C. Positions leucine 494–glycine 588 form a coiled coil.

Belongs to the DACH/dachshund family. Interacts with SIX6. Interacts with EYA2. Expressed in embryo, and at lower levels in the newborn.

Its subcellular location is the nucleus. In terms of biological role, transcription factor that is involved in regulation of organogenesis. Seems to be a regulator for SIX1 and SIX6. Seems to act as a corepressor of SIX6 in regulating proliferation by directly repressing cyclin-dependent kinase inhibitors, including the p27Kip1 promoter. Is recruited with SIX6 to the p27Kip1 promoter in embryonal retina. SIX6 corepression also seems to involve NCOR1, TBL1, HDAC1 and HDAC3. May be involved together with PAX3, SIX1, and EYA2 in regulation of myogenesis. In the developing somite, expression of DACH2 and PAX3 is regulated by the overlying ectoderm, and DACH2 and PAX3 positively regulate each other's expression. Probably binds to DNA via its DACHbox-N domain. The protein is Dachshund homolog 2 (Dach2) of Mus musculus (Mouse).